We begin with the raw amino-acid sequence, 113 residues long: uncharacterized protein (113 aa).

The segment at 31-113 (SNNNNNNNNN…YSPTKFNLQY (83 aa)) is disordered. Positions 32–98 (NNNNNNNNNN…NNNNNNNNNN (67 aa)) are enriched in low complexity. The span at 99-113 (SSSFEYSPTKFNLQY) shows a compositional bias: polar residues.

This is an uncharacterized protein from Dictyostelium discoideum (Social amoeba).